Here is a 141-residue protein sequence, read N- to C-terminus: Large ribosomal subunit protein uL11 (141 aa).

Belongs to the universal ribosomal protein uL11 family. Part of the ribosomal stalk of the 50S ribosomal subunit. Interacts with L10 and the large rRNA to form the base of the stalk. L10 forms an elongated spine to which L12 dimers bind in a sequential fashion forming a multimeric L10(L12)X complex. Post-translationally, one or more lysine residues are methylated.

Forms part of the ribosomal stalk which helps the ribosome interact with GTP-bound translation factors. This chain is Large ribosomal subunit protein uL11, found in Limosilactobacillus fermentum (strain NBRC 3956 / LMG 18251) (Lactobacillus fermentum).